A 375-amino-acid polypeptide reads, in one-letter code: Prophage integrase IntE (375 aa).

The region spanning 82-167 is the Core-binding (CB) domain; that stretch reads ITTSTWLDRY…VLIDVFKEAQ (86 aa). Residues 189–375 enclose the Tyr recombinase domain; it reads ITRQRLSLEE…RGKGWSKVAL (187 aa). Active-site residues include Arg226, Lys249, His330, Arg333, and His353. A disordered region spans residues 350–375; the sequence is LLGHKTQQQTDRYHDDRGKGWSKVAL. Tyr362 serves as the catalytic O-(3'-phospho-DNA)-tyrosine intermediate.

Belongs to the 'phage' integrase family.

In terms of biological role, integrase from the cryptic lambdoid prophage e14. Integrase is necessary for integration of the phage into the host genome by site-specific recombination. In conjunction with excisionase, integrase is also necessary for excision of the prophage from the host genome. The protein is Prophage integrase IntE (intE) of Escherichia coli (strain K12).